The following is a 115-amino-acid chain: Delta-hexatoxin-Hi1a (115 aa).

Positions 1–18 (MKVIATLYGLLFLTVVLG) are cleaved as a signal peptide. A propeptide spanning residues 19-73 (DITEGNENDLVENFREELSEADIPLLKKLEAIEDALLEKDFLPYEEEDRNARPKR) is cleaved from the precursor. 4 disulfide bridges follow: cysteine 74/cysteine 88, cysteine 81/cysteine 93, cysteine 87/cysteine 104, and cysteine 89/cysteine 115.

It belongs to the neurotoxin 06 (delta-actx) family. Expressed by the venom gland.

The protein resides in the secreted. Its function is as follows. Neurotoxin that slows inactivation of voltage-gated sodium channels (Nav). In vivo, is lethal to both vertebrates and insects. In Hadronyche infensa (Fraser island funnel-web spider), this protein is Delta-hexatoxin-Hi1a.